The sequence spans 643 residues: Zinc finger protein 23 (643 aa).

In terms of domain architecture, KRAB spans 1–43 (MLENYGNVASLGFPLLKPAVISQLEGGSELGGSSPLAAGTGLQ). Lysine 157 participates in a covalent cross-link: Glycyl lysine isopeptide (Lys-Gly) (interchain with G-Cter in SUMO2). The C2H2-type 1; degenerate zinc finger occupies 168-190 (FKCEELVEPFRCDSQLIQHQENN). 16 consecutive C2H2-type zinc fingers follow at residues 196-218 (YQCSECGKAFSINEKLIWHQRLH), 224-246 (FKCVECGKSFSYSSHYITHQTIH), 252-274 (YQCKMCGKAFSVNGSLSRHQRIH), 280-302 (YQCKECGNGFSCSSAYITHQRVH), 308-330 (YECNDCGKAFNVNAKLIQHQRIH), 336-358 (YECNECGKGFRCSSQLRQHQSIH), 364-386 (YQCKECGKGFNNNTKLIQHQRIH), 392-414 (YECTECGKAFSVKGKLIQHQRIH), 420-442 (YECNECGKAFRCNSQFRQHLRIH), 448-470 (YECNECGKAFSVNGKLMRHQRIH), 476-498 (FECNECGRCFTSKRNLLDHHRIH), 504-526 (YQCKECGKAFSINAKLTRHQRIH), 532-554 (FKCMECEKAFSCSSNYIVHQRIH), 560-582 (FQCKECGKAFHVNAHLIRHQRSH), 588-610 (FRCVECGKGFSFSSDYIIHQTVH), and 616-638 (YMCSVCGKAFRFSFQLSQHQSVH).

The protein belongs to the krueppel C2H2-type zinc-finger protein family.

Its subcellular location is the nucleus. May be involved in transcriptional regulation. May have a role in embryonic development. The chain is Zinc finger protein 23 (ZNF23) from Homo sapiens (Human).